Here is a 343-residue protein sequence, read N- to C-terminus: 2,3,4,5-tetrahydropyridine-2,6-dicarboxylate N-succinyltransferase (343 aa).

Glu-204 lines the Mg(2+) pocket. Glu-220 functions as the Acyl-anhydride intermediate in the catalytic mechanism. Succinyl-CoA-binding positions include Arg-222, Gly-237, Ser-240, Ala-263, 278–279 (ES), Gly-286, Lys-303, and 316–319 (RRNS).

It belongs to the type 2 tetrahydrodipicolinate N-succinyltransferase family. As to quaternary structure, homotrimer.

The protein localises to the cytoplasm. The catalysed reaction is (S)-2,3,4,5-tetrahydrodipicolinate + succinyl-CoA + H2O = (S)-2-succinylamino-6-oxoheptanedioate + CoA. The protein operates within amino-acid biosynthesis; L-lysine biosynthesis via DAP pathway; LL-2,6-diaminopimelate from (S)-tetrahydrodipicolinate (succinylase route): step 1/3. In terms of biological role, catalyzes the conversion of the cyclic tetrahydrodipicolinate (THDP) into the acyclic N-succinyl-L-2-amino-6-oxopimelate using succinyl-CoA. This is 2,3,4,5-tetrahydropyridine-2,6-dicarboxylate N-succinyltransferase from Vibrio cholerae serotype O1 (strain ATCC 39315 / El Tor Inaba N16961).